A 239-amino-acid polypeptide reads, in one-letter code: UPF0502 protein Bcen_5249 (239 aa).

Positions 196 to 239 (IRGAKGRTEAPRGRSGATQCAGSTDGERTRHRRRRTGRRVLIAS) are disordered. The segment covering 224-233 (TRHRRRRTGR) has biased composition (basic residues).

Belongs to the UPF0502 family.

In Burkholderia orbicola (strain AU 1054), this protein is UPF0502 protein Bcen_5249.